The following is a 301-amino-acid chain: Sulfate adenylyltransferase subunit 2 (301 aa).

Belongs to the PAPS reductase family. CysD subfamily. Heterodimer composed of CysD, the smaller subunit, and CysN.

The enzyme catalyses sulfate + ATP + H(+) = adenosine 5'-phosphosulfate + diphosphate. It functions in the pathway sulfur metabolism; hydrogen sulfide biosynthesis; sulfite from sulfate: step 1/3. With CysN forms the ATP sulfurylase (ATPS) that catalyzes the adenylation of sulfate producing adenosine 5'-phosphosulfate (APS) and diphosphate, the first enzymatic step in sulfur assimilation pathway. APS synthesis involves the formation of a high-energy phosphoric-sulfuric acid anhydride bond driven by GTP hydrolysis by CysN coupled to ATP hydrolysis by CysD. The sequence is that of Sulfate adenylyltransferase subunit 2 from Geobacter metallireducens (strain ATCC 53774 / DSM 7210 / GS-15).